Consider the following 276-residue polypeptide: DnaJ homolog subfamily C member 27-B (276 aa).

Residues 23–30 (GNAEVGKS), 71–75 (DMAGH), and 137–140 (NKID) contribute to the GTP site. The region spanning 220–276 (DSWDMLGVKPGATRDEVNKAYRKLAVLLHPDKCVAPGSEDAFKAVVNARTALLKNIK) is the J domain.

The protein belongs to the small GTPase superfamily. Rab family.

The protein localises to the nucleus. Functionally, GTPase possibly involved in regulation of the MEK/ERK pathway. This is DnaJ homolog subfamily C member 27-B (dnajc27-b) from Xenopus laevis (African clawed frog).